A 527-amino-acid chain; its full sequence is uncharacterized protein (527 aa).

This is an uncharacterized protein from Schizosaccharomyces pombe (strain 972 / ATCC 24843) (Fission yeast).